Consider the following 235-residue polypeptide: Zein-alpha ZG99 (235 aa).

Residues 1 to 21 form the signal peptide; it reads MAAKIFCLIMLLGLSASAATA.

It belongs to the zein family.

Zeins are major seed storage proteins. The protein is Zein-alpha ZG99 of Zea mays (Maize).